A 1311-amino-acid chain; its full sequence is Zinc finger protein 521 (1311 aa).

The C2H2-type 1; degenerate zinc-finger motif lies at 47-67 (HSCDSCLQVFESLSDITEHKI). Residues 81–108 (DPSCSWPASSPSSKDQTSPSHGEGCDFG) form a disordered region. A compositionally biased stretch (low complexity) spans 83-102 (SCSWPASSPSSKDQTSPSHG). C2H2-type zinc fingers lie at residues 118-140 (YPCQ…EQSH), 146-168 (FKCT…IKLH), 174-196 (YHCS…LKTH), 202-224 (YKCA…MQVH), 246-269 (QKCS…AECH), 281-304 (LQCM…EQVH), and 310-332 (NSCS…MDSH). The disordered stretch occupies residues 357 to 398 (TTPDSNLSVDSSTMVEAAPPIPKSRGRKRAAQQTSDMTGPSS). Polar residues-rich tracts occupy residues 359 to 370 (PDSNLSVDSSTM) and 387 to 398 (AQQTSDMTGPSS). The C2H2-type 9; degenerate zinc finger occupies 405-429 (YSCIYCNKQLFSSLAVLQIHLKTMH). 3 consecutive C2H2-type zinc fingers follow at residues 437–460 (HICQ…KQVH), 477–500 (YQCN…RCSH), and 513–536 (FFCP…RQVH). Serine 546 bears the Phosphoserine mark. The C2H2-type 13; atypical zinc finger occupies 560 to 585 (YSCSYCTNSPIFNSVLKLNKHIKENH). A phosphoserine mark is found at serine 605 and serine 608. C2H2-type zinc fingers lie at residues 634–656 (YICN…LKTH), 664–686 (LTCP…VTIH), 694–717 (YICE…LDMH), 722–745 (FRCT…AVKH), 752–775 (YRCT…KHNH), 783–805 (HKCI…ITTH), and 809–832 (YNCR…REKH). The tract at residues 863–883 (TNSQESHNSHDGSEEDVDSSE) is disordered. The C2H2-type 21; degenerate zinc-finger motif lies at 886–908 (YGCDICGAAYTMETLLQNHQLRD). C2H2-type zinc fingers lie at residues 930-952 (YKCN…MQTH), 959-981 (YMCP…KVTH), and 1020-1042 (FRCV…GTFH). The segment at 1065 to 1083 (YKCASCLKEFRSKQDLVKL) adopts a C2H2-type 25; degenerate zinc-finger fold. Over residues 1105–1119 (PGLSLPPGASRPGLG) the composition is skewed to low complexity. The segment at 1105–1136 (PGLSLPPGASRPGLGQNESLSAMEGKGKAGGL) is disordered. C2H2-type zinc fingers lie at residues 1138 to 1161 (TRCS…QTVH), 1195 to 1217 (YQCI…VANH), 1225 to 1247 (HECK…LIEH), 1256 to 1279 (FKCP…FSAH), and 1286 to 1309 (YDCT…MTQH). A Glycyl lysine isopeptide (Lys-Gly) (interchain with G-Cter in SUMO2) cross-link involves residue lysine 1146.

Belongs to the krueppel C2H2-type zinc-finger protein family. Interacts with EBF1. Interacts with SMAD1 and SMAD4. In terms of tissue distribution, widely expressed. Expressed in all B-cell stages.

The protein resides in the nucleus. In terms of biological role, transcription factor that can both act as an activator or a repressor depending on the context. Involved in BMP signaling and in the regulation of the immature compartment of the hematopoietic system. Associates with SMADs in response to BMP2 leading to activate transcription of BMP target genes. Acts as a transcriptional repressor via its interaction with EBF1, a transcription factor involved specification of B-cell lineage; this interaction preventing EBF1 to bind DNA and activate target genes. The protein is Zinc finger protein 521 (Znf521) of Mus musculus (Mouse).